Reading from the N-terminus, the 607-residue chain is CUB and zona pellucida-like domain-containing protein 1 (607 aa).

An N-terminal signal peptide occupies residues 1–24 (MELVRRLMPLTLLILSCLAELTMA). Cys17 and Cys58 are oxidised to a cystine. 2 CUB domains span residues 25–146 (EAEG…YFFS) and 154–265 (CGGY…YTSI). Topologically, residues 25-568 (EAEGNASCTV…EETPNQPFNS (544 aa)) are lumenal. Residues Asn29, Asn57, and Asn67 are each glycosylated (N-linked (GlcNAc...) asparagine). 3 cysteine pairs are disulfide-bonded: Cys85-Cys107, Cys154-Cys180, and Cys207-Cys229. In terms of domain architecture, ZP spans 276 to 519 (TCSSDRMRVI…SRCNQGCVSR (244 aa)). N-linked (GlcNAc...) asparagine glycosylation is found at Asn394 and Asn419. Cys442 and Cys498 are joined by a disulfide. The helical transmembrane segment at 569–589 (VHLFSFMVLALNVVTVATITV) threads the bilayer. The Cytoplasmic portion of the chain corresponds to 590 to 607 (RHFVNQRADYKYQKLQNY).

Detected in pancreas and epithelium of ovary. Expressed at higher levels in ovarian tumors than in normal tissue.

The protein localises to the zymogen granule membrane. Its function is as follows. Localized to zymogen granules, where it functions in trypsinogen activation. May indirectly regulate cell motility, cell-cell and cell/extracellular matrix interactions. The chain is CUB and zona pellucida-like domain-containing protein 1 from Homo sapiens (Human).